A 285-amino-acid chain; its full sequence is NAD kinase (285 aa).

Asp68 acts as the Proton acceptor in catalysis. NAD(+) is bound by residues 68–69, 142–143, Arg153, Lys170, Asp172, 183–188, and Gln242; these read DG, ND, and TAYNLS.

The protein belongs to the NAD kinase family. A divalent metal cation serves as cofactor.

It localises to the cytoplasm. It carries out the reaction NAD(+) + ATP = ADP + NADP(+) + H(+). In terms of biological role, involved in the regulation of the intracellular balance of NAD and NADP, and is a key enzyme in the biosynthesis of NADP. Catalyzes specifically the phosphorylation on 2'-hydroxyl of the adenosine moiety of NAD to yield NADP. The sequence is that of NAD kinase from Syntrophotalea carbinolica (strain DSM 2380 / NBRC 103641 / GraBd1) (Pelobacter carbinolicus).